The following is a 290-amino-acid chain: Ribosomal RNA small subunit methyltransferase A (290 aa).

The S-adenosyl-L-methionine site is built by asparagine 27, leucine 29, glycine 54, glutamate 75, aspartate 100, and asparagine 125.

This sequence belongs to the class I-like SAM-binding methyltransferase superfamily. rRNA adenine N(6)-methyltransferase family. RsmA subfamily.

It localises to the cytoplasm. The enzyme catalyses adenosine(1518)/adenosine(1519) in 16S rRNA + 4 S-adenosyl-L-methionine = N(6)-dimethyladenosine(1518)/N(6)-dimethyladenosine(1519) in 16S rRNA + 4 S-adenosyl-L-homocysteine + 4 H(+). In terms of biological role, specifically dimethylates two adjacent adenosines (A1518 and A1519) in the loop of a conserved hairpin near the 3'-end of 16S rRNA in the 30S particle. May play a critical role in biogenesis of 30S subunits. In Streptococcus pneumoniae (strain ATCC BAA-255 / R6), this protein is Ribosomal RNA small subunit methyltransferase A.